Consider the following 234-residue polypeptide: BTB/POZ domain-containing protein KCTD5 (234 aa).

Position 2 is an N-acetylalanine (Ala-2). Phosphoserine is present on Ser-10. One can recognise a BTB domain in the interval 44 to 146 (KWVRLNVGGT…LVKDKIRERD (103 aa)). The segment at 213–234 (PYGTASEPSEKAKILQERGSRM) is disordered. Residues 220-234 (PSEKAKILQERGSRM) show a composition bias toward basic and acidic residues.

Homopentamer. Interacts (via C-terminus) with GRASP55/GORASP2. Interacts with CUL3 and with ubiquitinated proteins. Interacts with CRY1. As to quaternary structure, (Microbial infection) Interacts with adeno-associated virus 2 (AAV-2) REP proteins.

The protein localises to the cytoplasm. Its subcellular location is the cytosol. It localises to the nucleus. Functionally, its interaction with CUL3 suggests that it may act as a substrate adapter in some E3 ligase complex. Does not affect the function of Kv channel Kv2.1/KCNB1, Kv1.2/KCNA2, Kv4.2/KCND2 and Kv3.4/KCNC4. The protein is BTB/POZ domain-containing protein KCTD5 (KCTD5) of Homo sapiens (Human).